The sequence spans 154 residues: Putative pre-16S rRNA nuclease (154 aa).

It belongs to the YqgF nuclease family.

It localises to the cytoplasm. Could be a nuclease involved in processing of the 5'-end of pre-16S rRNA. The chain is Putative pre-16S rRNA nuclease from Rickettsia peacockii (strain Rustic).